We begin with the raw amino-acid sequence, 99 residues long: MNQERVFKVLLGPHVSEKATVLAEKKGQFVFKVATDATKLEIKKAVEGLFNVKVENVSTVNVLGKTKRTARGLGKRNDWKKAIVSLQPGQDLDFSSSAE.

The protein belongs to the universal ribosomal protein uL23 family. In terms of assembly, part of the 50S ribosomal subunit. Contacts protein L29, and trigger factor when it is bound to the ribosome.

In terms of biological role, one of the early assembly proteins it binds 23S rRNA. One of the proteins that surrounds the polypeptide exit tunnel on the outside of the ribosome. Forms the main docking site for trigger factor binding to the ribosome. The chain is Large ribosomal subunit protein uL23 from Pseudomonas entomophila (strain L48).